A 398-amino-acid polypeptide reads, in one-letter code: Bifunctional enzyme IspD/IspF (398 aa).

The interval 1–234 (MAKSQRTAVV…ARLAAQLGDI (234 aa)) is 2-C-methyl-D-erythritol 4-phosphate cytidylyltransferase. The segment at 235–398 (RTGTGYDVHA…LPFNEKTWSV (164 aa)) is 2-C-methyl-D-erythritol 2,4-cyclodiphosphate synthase. 2 residues coordinate a divalent metal cation: D241 and H243. 4-CDP-2-C-methyl-D-erythritol 2-phosphate-binding positions include 241–243 (DVH) and 267–268 (HS). A divalent metal cation is bound at residue H275. 4-CDP-2-C-methyl-D-erythritol 2-phosphate-binding positions include 289–291 (DIG), 365–368 (TTSE), F372, and R375.

In the N-terminal section; belongs to the IspD/TarI cytidylyltransferase family. IspD subfamily. It in the C-terminal section; belongs to the IspF family. A divalent metal cation serves as cofactor.

It carries out the reaction 2-C-methyl-D-erythritol 4-phosphate + CTP + H(+) = 4-CDP-2-C-methyl-D-erythritol + diphosphate. It catalyses the reaction 4-CDP-2-C-methyl-D-erythritol 2-phosphate = 2-C-methyl-D-erythritol 2,4-cyclic diphosphate + CMP. It participates in isoprenoid biosynthesis; isopentenyl diphosphate biosynthesis via DXP pathway; isopentenyl diphosphate from 1-deoxy-D-xylulose 5-phosphate: step 2/6. It functions in the pathway isoprenoid biosynthesis; isopentenyl diphosphate biosynthesis via DXP pathway; isopentenyl diphosphate from 1-deoxy-D-xylulose 5-phosphate: step 4/6. Its function is as follows. Bifunctional enzyme that catalyzes the formation of 4-diphosphocytidyl-2-C-methyl-D-erythritol from CTP and 2-C-methyl-D-erythritol 4-phosphate (MEP) (IspD), and catalyzes the conversion of 4-diphosphocytidyl-2-C-methyl-D-erythritol 2-phosphate (CDP-ME2P) to 2-C-methyl-D-erythritol 2,4-cyclodiphosphate (ME-CPP) with a corresponding release of cytidine 5-monophosphate (CMP) (IspF). The polypeptide is Bifunctional enzyme IspD/IspF (Bradyrhizobium diazoefficiens (strain JCM 10833 / BCRC 13528 / IAM 13628 / NBRC 14792 / USDA 110)).